The chain runs to 403 residues: MNSGDIMKLNIKKILTIGKREVLSNIKRKQFLIATIIGPLIIIALAIIGSFMMFDIKEIKVGYVDEFGLGIPNKVVENNFGKNTTIYFIKYENIEKGKEDVLNKSIDALIVIPKDYLDSGKIILYSTTKSPNPIITDTLNKFLLKKLLKGKVDNKTYNRVINPMNLEIYSVSKKGFEKETFLSQLLPIGFVFLLYMAISSLSGIIVSSIIEEKQNRIMELLLCYSSAENLMFGKILGISAVGLLQIGIWVLFALPIIITYAVKVSLYLAIFALIYFVLGYLFYSSLLCGLSSLFSHPKDASQLISPIIIIQIIPIMFMNTIMVNPNHYMAKILSYVPFTAPYAVVLRASVTQLPLIEIVLSTAIMIVSIVISFILSIKLFKIGVLLYEENLTLKRVIKIIFKK.

6 helical membrane passes run 31–51, 186–206, 238–258, 268–288, 303–323, and 355–375; these read FLIATIIGPLIIIALAIIGSF, LPIGFVFLLYMAISSLSGIIV, ISAVGLLQIGIWVLFALPIII, LAIFALIYFVLGYLFYSSLLC, LISPIIIIQIIPIMFMNTIMV, and LIEIVLSTAIMIVSIVISFIL.

It to B.subtilis YhaP.

The protein localises to the cell membrane. This is an uncharacterized protein from Methanocaldococcus jannaschii (strain ATCC 43067 / DSM 2661 / JAL-1 / JCM 10045 / NBRC 100440) (Methanococcus jannaschii).